Reading from the N-terminus, the 1013-residue chain is GTPase-activating protein BEM3 (1013 aa).

Disordered stretches follow at residues 90–197 (TVVE…GSPA), 258–277 (GSRY…PESI), 282–301 (SDLQ…TDLG), and 307–421 (VDTT…HQSK). Residues 143 to 160 (QEATSGAQQVPLLTSSKS) are compositionally biased toward polar residues. Composition is skewed to polar residues over residues 309–319 (TTFNAEDNPTG), 333–388 (TLQN…TSSN), and 404–418 (KSYS…SNSH). The region spanning 555–662 (EFAKEGMLLV…WISVLTTLCD (108 aa)) is the PH domain. Positions 702–726 (AMDATSPTRPNDPNPVSLTSEEEKE) are disordered. Residues 706 to 720 (TSPTRPNDPNPVSLT) are compositionally biased toward polar residues. Residues 799–1013 (LQLSSHPYQG…PPVNIHIPQI (215 aa)) form the Rho-GAP domain.

It is found in the cytoplasm. GTPase-activating protein (GAP) for CDC42 and less efficiently for RHO1. Negative regulator of the pheromone-response pathway through the STE20 protein kinase. In Eremothecium gossypii (strain ATCC 10895 / CBS 109.51 / FGSC 9923 / NRRL Y-1056) (Yeast), this protein is GTPase-activating protein BEM3 (BEM3).